Here is a 562-residue protein sequence, read N- to C-terminus: Arginine--tRNA ligase (562 aa).

A 'HIGH' region motif is present at residues 122–132; sequence PNIAKPISMGH.

Belongs to the class-I aminoacyl-tRNA synthetase family. Monomer.

It is found in the cytoplasm. The enzyme catalyses tRNA(Arg) + L-arginine + ATP = L-arginyl-tRNA(Arg) + AMP + diphosphate. This chain is Arginine--tRNA ligase, found in Pediococcus pentosaceus (strain ATCC 25745 / CCUG 21536 / LMG 10740 / 183-1w).